Consider the following 353-residue polypeptide: Photosystem II D2 protein (353 aa).

T2 carries the N-acetylthreonine modification. Residue T2 is modified to Phosphothreonine. Residues 41 to 61 form a helical membrane-spanning segment; the sequence is CAYFALGGWFTGTTFVTSWYT. Residue H118 coordinates chlorophyll a. Residues 125–141 form a helical membrane-spanning segment; that stretch reads GFMLRQFELARSVQLRP. Positions 130 and 143 each coordinate pheophytin a. Residues 153-166 form a helical membrane-spanning segment; the sequence is VFVSVFLIYPLGQS. H198 serves as a coordination point for chlorophyll a. A helical membrane pass occupies residues 208–228; the sequence is AALLCAIHGATVENTLFEDGD. Positions 215 and 262 each coordinate a plastoquinone. H215 serves as a coordination point for Fe cation. A Fe cation-binding site is contributed by H269. Residues 279-295 form a helical membrane-spanning segment; sequence GLWMSAIGVVGLALNLR.

The protein belongs to the reaction center PufL/M/PsbA/D family. In terms of assembly, PSII is composed of 1 copy each of membrane proteins PsbA, PsbB, PsbC, PsbD, PsbE, PsbF, PsbH, PsbI, PsbJ, PsbK, PsbL, PsbM, PsbT, PsbX, PsbY, PsbZ, Psb30/Ycf12, at least 3 peripheral proteins of the oxygen-evolving complex and a large number of cofactors. It forms dimeric complexes. The D1/D2 heterodimer binds P680, chlorophylls that are the primary electron donor of PSII, and subsequent electron acceptors. It shares a non-heme iron and each subunit binds pheophytin, quinone, additional chlorophylls, carotenoids and lipids. There is also a Cl(-1) ion associated with D1 and D2, which is required for oxygen evolution. The PSII complex binds additional chlorophylls, carotenoids and specific lipids. serves as cofactor.

Its subcellular location is the plastid. It is found in the chloroplast thylakoid membrane. It carries out the reaction 2 a plastoquinone + 4 hnu + 2 H2O = 2 a plastoquinol + O2. Photosystem II (PSII) is a light-driven water:plastoquinone oxidoreductase that uses light energy to abstract electrons from H(2)O, generating O(2) and a proton gradient subsequently used for ATP formation. It consists of a core antenna complex that captures photons, and an electron transfer chain that converts photonic excitation into a charge separation. The D1/D2 (PsbA/PsbD) reaction center heterodimer binds P680, the primary electron donor of PSII as well as several subsequent electron acceptors. D2 is needed for assembly of a stable PSII complex. The chain is Photosystem II D2 protein from Agrostis stolonifera (Creeping bentgrass).